We begin with the raw amino-acid sequence, 863 residues long: Oleate activated transcription factor 3 (863 aa).

A DNA-binding region (zn(2)-C6 fungal-type) is located at residues 19–47; it reads CTNCKKRKSKCDRTKPCGTCVRLGDVDSC. Residues 52 to 63 are compositionally biased toward polar residues; the sequence is DSSGQPESSPSL. The tract at residues 52 to 81 is disordered; that stretch reads DSSGQPESSPSLNDADPLRKQSTPAERISP.

This sequence belongs to the OAF3 family.

Its subcellular location is the cytoplasm. The protein resides in the nucleus. It is found in the mitochondrion. Its function is as follows. Transcriptional inhibitor with a significantly increased number of target genes in response to oleate. This is Oleate activated transcription factor 3 (OAF3) from Saccharomyces cerevisiae (strain RM11-1a) (Baker's yeast).